Consider the following 374-residue polypeptide: Ribosomal RNA large subunit methyltransferase G (374 aa).

The protein belongs to the methyltransferase superfamily. RlmG family.

It is found in the cytoplasm. It carries out the reaction guanosine(1835) in 23S rRNA + S-adenosyl-L-methionine = N(2)-methylguanosine(1835) in 23S rRNA + S-adenosyl-L-homocysteine + H(+). Functionally, specifically methylates the guanine in position 1835 (m2G1835) of 23S rRNA. This is Ribosomal RNA large subunit methyltransferase G from Pseudomonas putida (strain GB-1).